Consider the following 894-residue polypeptide: Tyrosine-protein kinase receptor UFO (894 aa).

A signal peptide spans methionine 1–methionine 25. Residues alanine 26 to glutamate 92 are interaction with GAS6. At alanine 26–tryptophan 451 the chain is on the extracellular side. Ig-like C2-type domains are found at residues proline 27–serine 128 and proline 139–threonine 222. The N-linked (GlcNAc...) asparagine glycan is linked to asparagine 43. A disulfide bridge links cysteine 56 with cysteine 117. N-linked (GlcNAc...) asparagine glycosylation is found at asparagine 157 and asparagine 198. Cysteine 160 and cysteine 205 form a disulfide bridge. 2 Fibronectin type-III domains span residues glutamine 227–glycine 331 and proline 336–proline 428. N-linked (GlcNAc...) asparagine glycans are attached at residues asparagine 339, asparagine 345, and asparagine 401. Residues tyrosine 452 to valine 472 traverse the membrane as a helical segment. The Cytoplasmic portion of the chain corresponds to histidine 473–alanine 894. A Protein kinase domain is found at valine 536–leucine 807. ATP is bound by residues leucine 542–valine 550 and lysine 567. Catalysis depends on aspartate 672, which acts as the Proton acceptor. Phosphotyrosine; by autocatalysis occurs at positions 703, 779, and 821. Disordered regions lie at residues asparagine 823 to serine 853 and tyrosine 866 to alanine 894. Tyrosine 866 is subject to Phosphotyrosine; by autocatalysis. Residue serine 884 is modified to Phosphoserine.

This sequence belongs to the protein kinase superfamily. Tyr protein kinase family. AXL/UFO subfamily. In terms of assembly, heterodimer and heterotetramer with ligand GAS6. Interacts with CBL, GRB2, LCK, NCK2, PIK3R1, PIK3R2, PIK3R3, PLCG1, SOCS1 and TNS2. Part of a complex including AXL, TNK2 and GRB2, in which GRB2 promotes AXL recruitment by TNK2. In terms of processing, monoubiquitinated upon GAS6-binding. A very small proportion of the receptor could be subjected to polyubiquitination in a very transient fashion. Phosphorylated at tyrosine residues by autocatalysis, which activates kinase activity. Highly expressed in metastatic colon tumors. Expressed in primary colon tumors. Weakly expressed in normal colon tissue.

It is found in the cell membrane. It catalyses the reaction L-tyrosyl-[protein] + ATP = O-phospho-L-tyrosyl-[protein] + ADP + H(+). Activated by GAS6-binding and subsequent autophosphorylation. Its function is as follows. Receptor tyrosine kinase that transduces signals from the extracellular matrix into the cytoplasm by binding growth factor GAS6 and which is thus regulating many physiological processes including cell survival, cell proliferation, migration and differentiation. Ligand binding at the cell surface induces dimerization and autophosphorylation of AXL. Following activation by ligand, AXL binds and induces tyrosine phosphorylation of PI3-kinase subunits PIK3R1, PIK3R2 and PIK3R3; but also GRB2, PLCG1, LCK and PTPN11. Other downstream substrate candidates for AXL are CBL, NCK2, SOCS1 and TNS2. Recruitment of GRB2 and phosphatidylinositol 3 kinase regulatory subunits by AXL leads to the downstream activation of the AKT kinase. GAS6/AXL signaling plays a role in various processes such as endothelial cell survival during acidification by preventing apoptosis, optimal cytokine signaling during human natural killer cell development, hepatic regeneration, gonadotropin-releasing hormone neuron survival and migration, platelet activation, or regulation of thrombotic responses. Also plays an important role in inhibition of Toll-like receptors (TLRs)-mediated innate immune response. In terms of biological role, (Microbial infection) Acts as a receptor for lassa virus and lymphocytic choriomeningitis virus, possibly through GAS6 binding to phosphatidyl-serine at the surface of virion envelope. Functionally, (Microbial infection) Acts as a receptor for Ebolavirus, possibly through GAS6 binding to phosphatidyl-serine at the surface of virion envelope. (Microbial infection) Promotes Zika virus entry in glial cells, Sertoli cells and astrocytes. Additionally, Zika virus potentiates AXL kinase activity to antagonize type I interferon signaling and thereby promotes infection. Interferon signaling inhibition occurs via an SOCS1-dependent mechanism. This Homo sapiens (Human) protein is Tyrosine-protein kinase receptor UFO (AXL).